The primary structure comprises 121 residues: Huntingtin-interacting protein K (121 aa).

Residues Met1 to Thr13 show a composition bias toward acidic residues. Residues Met1–Lys75 form a disordered region. Basic and acidic residues-rich tracts occupy residues Arg20 to Ile47 and Gly60 to Lys75. Ser30 is subject to Phosphoserine. The required for association with the NAA10-NAA15 complex stretch occupies residues Leu52–Asn121. Positions Arg62–Glu107 form a coiled coil.

As to quaternary structure, component of the N-terminal acetyltransferase A (NatA)/HYPK complex at least composed of NAA10, NAA15 and HYPK, which has N-terminal acetyltransferase activity. Within the complex interacts with NAA10. Within the complex interacts with NAA15. Predominantly interacts with NAA15 in the NAA10-NAA15 complex (also called the NatA complex); the interaction with the NatA complex reduces the acetylation activity of the NatA complex. Interacts with HTT (via N-terminus). The NatA complex is required for HYPK stability and for reducing polyQ aggregation of HTT. Component of the N-terminal acetyltransferase E (NatE)/HYPK complex at least composed of NAA10, NAA15, NAA50 and HYPK. Within the complex interacts with NAA10 and NAA15. Does not interact with NAA50. Interaction with NAA15 reduces the capacity of NAA15 to interact with NAA50. Its capacity to interact with the NatA complex is reduced by NAA50. Does not interact with the N-terminal acetyltransferase B (NatB) complex component NAA25 or the N-terminal acetyltransferase C (NatC) complex component NAA35.

The protein resides in the nucleus. Its subcellular location is the cytoplasm. Component of several N-terminal acetyltransferase complexes. Inhibits the N-terminal acetylation activity of the N-terminal acetyltransferase NAA10-NAA15 complex (also called the NatA complex). Has chaperone-like activity preventing polyglutamine (polyQ) aggregation of HTT in neuronal cells probably while associated with the NatA complex. May play a role in the NatA complex-mediated N-terminal acetylation of PCNP. The polypeptide is Huntingtin-interacting protein K (Homo sapiens (Human)).